The chain runs to 356 residues: Neutral protease 2 homolog MEP5 (356 aa).

A signal peptide spans 1 to 19; the sequence is MRVSSSLIALAALAVQALA. The propeptide occupies 20–179; it reads LPVNELAERD…ASAIPELDKR (160 aa). 2 disulfides stabilise this stretch: cysteine 187–cysteine 259 and cysteine 266–cysteine 284. Histidine 308 lines the Zn(2+) pocket. Residue glutamate 309 is part of the active site. Residues histidine 312 and aspartate 323 each coordinate Zn(2+).

Belongs to the peptidase M35 family. It depends on Zn(2+) as a cofactor.

The protein resides in the secreted. The enzyme catalyses Preferential cleavage of bonds with hydrophobic residues in P1'. Also 3-Asn-|-Gln-4 and 8-Gly-|-Ser-9 bonds in insulin B chain.. Secreted metalloproteinase that allows assimilation of proteinaceous substrates. Shows high activities on basic nuclear substrates such as histone and protamine. May be involved in virulence. In Coccidioides posadasii (strain C735) (Valley fever fungus), this protein is Neutral protease 2 homolog MEP5 (MEP5).